A 224-amino-acid polypeptide reads, in one-letter code: Peroxiredoxin-like 2A (224 aa).

Positions Met-14–Val-112 are thioredoxin fold. Position 85 (Sec-85) is a non-standard amino acid, selenocysteine. The active-site Redox-active is the Cys-88.

The protein belongs to the peroxiredoxin-like PRXL2 family. PRXL2A subfamily.

It localises to the cytoplasm. In terms of biological role, involved in redox regulation of the cell. Acts as an antioxidant. Inhibits TNFSF11-induced NFKB1 and JUN activation and osteoclast differentiation. May affect bone resorption and help to maintain bone mass. This is Peroxiredoxin-like 2A (PRXL2A) from Gallus gallus (Chicken).